A 394-amino-acid polypeptide reads, in one-letter code: Endothelial cell-selective adhesion molecule (394 aa).

The N-terminal stretch at 1–29 is a signal peptide; it reads MILPARTPETSLLRVLFLGLSTLAAFSLA. At 30-251 the chain is on the extracellular side; it reads QMELHVPPGL…LDVMTGSKAA (222 aa). The Ig-like V-type domain occupies 37-146; sequence PGLNKLEAVE…DGKNIGHSIK (110 aa). Residues Asn-111, Asn-172, Asn-216, and Asn-239 are each glycosylated (N-linked (GlcNAc...) asparagine). Positions 156-243 constitute an Ig-like C2-type domain; sequence PAPPSCSFQG…GFAQCNVTLD (88 aa). A disulfide bridge links Cys-177 with Cys-227. The helical transmembrane segment at 252 to 272 threads the bilayer; that stretch reads VVAGAVVGTFVGLVLIAGLVL. Over 273–394 the chain is Cytoplasmic; the sequence is LYQRRSKTLE…PAQSQAGSLV (122 aa). The tract at residues 300–372 is disordered; the sequence is WTKGSDTISK…SLTPGGVSSS (73 aa). Polar residues-rich tracts occupy residues 303 to 318 and 335 to 347; these read GSDT…SVTS and FTPT…QALS. Ser-304 bears the Phosphoserine mark. 2 positions are modified to phosphothreonine: Thr-336 and Thr-338. 3 positions are modified to phosphoserine: Ser-340, Ser-343, and Ser-348.

Interacts with MAGI1.

The protein localises to the cell junction. It localises to the adherens junction. The protein resides in the tight junction. It is found in the cell membrane. Its function is as follows. Can mediate aggregation most likely through a homophilic molecular interaction. The protein is Endothelial cell-selective adhesion molecule (Esam) of Rattus norvegicus (Rat).